We begin with the raw amino-acid sequence, 303 residues long: N-acetyl-D-glucosamine kinase (303 aa).

ATP-binding positions include 4–11 and 133–140; these read GFDIGGTK and GVGGGLVL. Zn(2+) is bound by residues histidine 157, cysteine 177, cysteine 179, and cysteine 184.

This sequence belongs to the ROK (NagC/XylR) family. NagK subfamily.

It catalyses the reaction N-acetyl-D-glucosamine + ATP = N-acetyl-D-glucosamine 6-phosphate + ADP + H(+). The protein operates within cell wall biogenesis; peptidoglycan recycling. Its function is as follows. Catalyzes the phosphorylation of N-acetyl-D-glucosamine (GlcNAc) derived from cell-wall degradation, yielding GlcNAc-6-P. The sequence is that of N-acetyl-D-glucosamine kinase from Salmonella dublin (strain CT_02021853).